A 404-amino-acid chain; its full sequence is Probable protein phosphatase 1N (404 aa).

The PPM-type phosphatase domain maps to Arg59–Phe319. Residues Asp96, Gly97, Asp267, and Asp310 each coordinate Mn(2+).

This sequence belongs to the PP2C family. Mg(2+) serves as cofactor. Requires Mn(2+) as cofactor.

The enzyme catalyses O-phospho-L-seryl-[protein] + H2O = L-seryl-[protein] + phosphate. It catalyses the reaction O-phospho-L-threonyl-[protein] + H2O = L-threonyl-[protein] + phosphate. The protein is Probable protein phosphatase 1N (Ppm1n) of Mus musculus (Mouse).